A 227-amino-acid polypeptide reads, in one-letter code: ATP synthase F(0) complex subunit a (227 aa).

6 helical membrane-spanning segments follow: residues 14 to 34 (YLGI…FPLP), 69 to 89 (WALL…LGLL), 98 to 118 (QLSL…IIGL), 132 to 152 (EGTP…SLFI), 179 to 199 (VFVL…VLFL), and 202 to 222 (LLEV…LSLY).

It belongs to the ATPase A chain family. Component of the ATP synthase complex composed at least of ATP5F1A/subunit alpha, ATP5F1B/subunit beta, ATP5MC1/subunit c (homooctomer), MT-ATP6/subunit a, MT-ATP8/subunit 8, ATP5ME/subunit e, ATP5MF/subunit f, ATP5MG/subunit g, ATP5MK/subunit k, ATP5MJ/subunit j, ATP5F1C/subunit gamma, ATP5F1D/subunit delta, ATP5F1E/subunit epsilon, ATP5PF/subunit F6, ATP5PB/subunit b, ATP5PD/subunit d, ATP5PO/subunit OSCP. ATP synthase complex consists of a soluble F(1) head domain (subunits alpha(3) and beta(3)) - the catalytic core - and a membrane F(0) domain - the membrane proton channel (subunits c, a, 8, e, f, g, k and j). These two domains are linked by a central stalk (subunits gamma, delta, and epsilon) rotating inside the F1 region and a stationary peripheral stalk (subunits F6, b, d, and OSCP). Interacts with DNAJC30; interaction is direct.

It is found in the mitochondrion inner membrane. The enzyme catalyses H(+)(in) = H(+)(out). Subunit a, of the mitochondrial membrane ATP synthase complex (F(1)F(0) ATP synthase or Complex V) that produces ATP from ADP in the presence of a proton gradient across the membrane which is generated by electron transport complexes of the respiratory chain. ATP synthase complex consist of a soluble F(1) head domain - the catalytic core - and a membrane F(1) domain - the membrane proton channel. These two domains are linked by a central stalk rotating inside the F(1) region and a stationary peripheral stalk. During catalysis, ATP synthesis in the catalytic domain of F(1) is coupled via a rotary mechanism of the central stalk subunits to proton translocation. With the subunit c (ATP5MC1), forms the proton-conducting channel in the F(0) domain, that contains two crucial half-channels (inlet and outlet) that facilitate proton movement from the mitochondrial intermembrane space (IMS) into the matrix. Protons are taken up via the inlet half-channel and released through the outlet half-channel, following a Grotthuss mechanism. The protein is ATP synthase F(0) complex subunit a of Formosania lacustris (Oriental stream loach).